We begin with the raw amino-acid sequence, 417 residues long: Serine hydroxymethyltransferase 2 (417 aa).

(6S)-5,6,7,8-tetrahydrofolate-binding positions include L121 and 125 to 127 (GHL). Position 229 is an N6-(pyridoxal phosphate)lysine (K229). Residue 354–356 (SPF) coordinates (6S)-5,6,7,8-tetrahydrofolate.

This sequence belongs to the SHMT family. Homodimer. It depends on pyridoxal 5'-phosphate as a cofactor.

Its subcellular location is the cytoplasm. It carries out the reaction (6R)-5,10-methylene-5,6,7,8-tetrahydrofolate + glycine + H2O = (6S)-5,6,7,8-tetrahydrofolate + L-serine. Its pathway is one-carbon metabolism; tetrahydrofolate interconversion. It participates in amino-acid biosynthesis; glycine biosynthesis; glycine from L-serine: step 1/1. Catalyzes the reversible interconversion of serine and glycine with tetrahydrofolate (THF) serving as the one-carbon carrier. This reaction serves as the major source of one-carbon groups required for the biosynthesis of purines, thymidylate, methionine, and other important biomolecules. Also exhibits THF-independent aldolase activity toward beta-hydroxyamino acids, producing glycine and aldehydes, via a retro-aldol mechanism. This Pseudomonas putida (strain ATCC 47054 / DSM 6125 / CFBP 8728 / NCIMB 11950 / KT2440) protein is Serine hydroxymethyltransferase 2.